A 545-amino-acid polypeptide reads, in one-letter code: CTP synthase (545 aa).

Residues 1–266 (MTTNYIFVTG…DDYICKRFSL (266 aa)) form an amidoligase domain region. Residue S14 participates in CTP binding. S14 is a UTP binding site. ATP-binding positions include 15 to 20 (SLGKGI) and D72. 2 residues coordinate Mg(2+): D72 and E140. CTP is bound by residues 147–149 (DIE), 187–192 (KTKPTQ), and K223. UTP-binding positions include 187–192 (KTKPTQ) and K223. 239-241 (KDV) serves as a coordination point for ATP. The region spanning 291-542 (TIGMIGKYVE…VKAAGEYQKR (252 aa)) is the Glutamine amidotransferase type-1 domain. Residue G352 coordinates L-glutamine. Catalysis depends on C379, which acts as the Nucleophile; for glutamine hydrolysis. L-glutamine contacts are provided by residues 380–383 (LGMQ), E403, and R470. Residues H515 and E517 contribute to the active site.

It belongs to the CTP synthase family. In terms of assembly, homotetramer.

It catalyses the reaction UTP + L-glutamine + ATP + H2O = CTP + L-glutamate + ADP + phosphate + 2 H(+). The enzyme catalyses L-glutamine + H2O = L-glutamate + NH4(+). The catalysed reaction is UTP + NH4(+) + ATP = CTP + ADP + phosphate + 2 H(+). It functions in the pathway pyrimidine metabolism; CTP biosynthesis via de novo pathway; CTP from UDP: step 2/2. Its activity is regulated as follows. Allosterically activated by GTP, when glutamine is the substrate; GTP has no effect on the reaction when ammonia is the substrate. The allosteric effector GTP functions by stabilizing the protein conformation that binds the tetrahedral intermediate(s) formed during glutamine hydrolysis. Inhibited by the product CTP, via allosteric rather than competitive inhibition. Its function is as follows. Catalyzes the ATP-dependent amination of UTP to CTP with either L-glutamine or ammonia as the source of nitrogen. Regulates intracellular CTP levels through interactions with the four ribonucleotide triphosphates. The sequence is that of CTP synthase from Yersinia enterocolitica serotype O:8 / biotype 1B (strain NCTC 13174 / 8081).